A 166-amino-acid polypeptide reads, in one-letter code: Endoribonuclease YbeY (166 aa).

Zn(2+) is bound by residues H132, H136, and H142.

It belongs to the endoribonuclease YbeY family. Zn(2+) serves as cofactor.

It localises to the cytoplasm. Functionally, single strand-specific metallo-endoribonuclease involved in late-stage 70S ribosome quality control and in maturation of the 3' terminus of the 16S rRNA. This chain is Endoribonuclease YbeY, found in Clostridium botulinum (strain Loch Maree / Type A3).